The following is a 461-amino-acid chain: LL-diaminopimelate aminotransferase, chloroplastic (461 aa).

Residues methionine 1–cysteine 45 constitute a chloroplast transit peptide. The substrate site is built by tyrosine 72 and glycine 99. Pyridoxal 5'-phosphate is bound by residues tyrosine 129, alanine 163–lysine 164, tyrosine 187, asparagine 244, tyrosine 275, and serine 302–serine 304. The substrate site is built by lysine 164, tyrosine 187, and asparagine 244. The residue at position 305 (lysine 305) is an N6-(pyridoxal phosphate)lysine. Residues arginine 313 and asparagine 344 each coordinate pyridoxal 5'-phosphate. Substrate contacts are provided by asparagine 344 and arginine 439.

Belongs to the class-I pyridoxal-phosphate-dependent aminotransferase family. LL-diaminopimelate aminotransferase subfamily. In terms of assembly, homodimer. It depends on pyridoxal 5'-phosphate as a cofactor. As to expression, highly expressed in seedlings, roots, stems, flowers and leaves. Lower expression in siliques.

It localises to the plastid. It is found in the chloroplast. The enzyme catalyses (2S,6S)-2,6-diaminopimelate + 2-oxoglutarate = (S)-2,3,4,5-tetrahydrodipicolinate + L-glutamate + H2O + H(+). It functions in the pathway amino-acid biosynthesis; L-lysine biosynthesis via DAP pathway; LL-2,6-diaminopimelate from (S)-tetrahydrodipicolinate (aminotransferase route): step 1/1. In terms of biological role, required for lysine biosynthesis. Catalyzes the direct conversion of tetrahydrodipicolinate to LL-diaminopimelate, a reaction that requires three enzymes in E.coli. Not active with meso-diaminopimelate, lysine or ornithine as substrates. The polypeptide is LL-diaminopimelate aminotransferase, chloroplastic (DAP) (Arabidopsis thaliana (Mouse-ear cress)).